The sequence spans 174 residues: DNA-directed RNA polymerase IV subunit 7 (174 aa).

Belongs to the eukaryotic RPB7/RPC8 RNA polymerase subunit family. As to quaternary structure, component of the RNA polymerase IV complex. Interacts with NRPD1.

The protein resides in the nucleus. Functionally, DNA-dependent RNA polymerase catalyzes the transcription of DNA into RNA using the four ribonucleoside triphosphates as substrates. Component of RNA polymerase IV which mediates 24-nt short-interfering RNAs (siRNA) accumulation. Implicated in siRNA-directed heterochromatin formation through the action of DCL3 and AGO4, and subsequent DNA methylation-dependent silencing of targeted sequences. Essential component of a self-reinforcing loop coupling de novo DNA methylation to siRNA production. Required for intercellular but not intracellular RNA interference (RNAi) leading to systemic post-transcriptional gene silencing. Involved in the maintenance of post-transcriptional RNA silencing. This Arabidopsis thaliana (Mouse-ear cress) protein is DNA-directed RNA polymerase IV subunit 7 (NRPD7).